Reading from the N-terminus, the 129-residue chain is Small ribosomal subunit protein uS11 (129 aa).

It belongs to the universal ribosomal protein uS11 family. As to quaternary structure, part of the 30S ribosomal subunit. Interacts with proteins S7 and S18. Binds to IF-3.

Located on the platform of the 30S subunit, it bridges several disparate RNA helices of the 16S rRNA. Forms part of the Shine-Dalgarno cleft in the 70S ribosome. The polypeptide is Small ribosomal subunit protein uS11 (Ectopseudomonas mendocina (strain ymp) (Pseudomonas mendocina)).